Consider the following 455-residue polypeptide: UDP-N-acetylmuramoylalanine--D-glutamate ligase (455 aa).

Position 118–124 (118–124 (GTNGKST)) interacts with ATP.

This sequence belongs to the MurCDEF family.

It is found in the cytoplasm. The enzyme catalyses UDP-N-acetyl-alpha-D-muramoyl-L-alanine + D-glutamate + ATP = UDP-N-acetyl-alpha-D-muramoyl-L-alanyl-D-glutamate + ADP + phosphate + H(+). It functions in the pathway cell wall biogenesis; peptidoglycan biosynthesis. Functionally, cell wall formation. Catalyzes the addition of glutamate to the nucleotide precursor UDP-N-acetylmuramoyl-L-alanine (UMA). This chain is UDP-N-acetylmuramoylalanine--D-glutamate ligase, found in Myxococcus xanthus (strain DK1622).